We begin with the raw amino-acid sequence, 196 residues long: Putative HTH-type transcriptional regulator protein PtxE (196 aa).

Positions 1–59 constitute an HTH lysR-type domain; the sequence is MLNPVWLKSLVAIVQTGSFQSAARALGLAQPTVSQHLQKLEEQVGVTLVQRSRSGCQPT. The segment at residues 19–38 is a DNA-binding region (H-T-H motif); sequence FQSAARALGLAQPTVSQHLQ.

This sequence belongs to the LysR transcriptional regulatory family.

The chain is Putative HTH-type transcriptional regulator protein PtxE (ptxE) from Stutzerimonas stutzeri (Pseudomonas stutzeri).